Here is a 429-residue protein sequence, read N- to C-terminus: Enolase (429 aa).

Glutamine 167 lines the (2R)-2-phosphoglycerate pocket. The active-site Proton donor is the glutamate 209. Mg(2+) is bound by residues aspartate 246, glutamate 289, and aspartate 316. Lysine 341, arginine 370, serine 371, and lysine 392 together coordinate (2R)-2-phosphoglycerate. The active-site Proton acceptor is lysine 341.

The protein belongs to the enolase family. As to quaternary structure, component of the RNA degradosome, a multiprotein complex involved in RNA processing and mRNA degradation. Mg(2+) serves as cofactor.

The protein resides in the cytoplasm. Its subcellular location is the secreted. It localises to the cell surface. It carries out the reaction (2R)-2-phosphoglycerate = phosphoenolpyruvate + H2O. It participates in carbohydrate degradation; glycolysis; pyruvate from D-glyceraldehyde 3-phosphate: step 4/5. Its function is as follows. Catalyzes the reversible conversion of 2-phosphoglycerate (2-PG) into phosphoenolpyruvate (PEP). It is essential for the degradation of carbohydrates via glycolysis. The chain is Enolase from Pseudomonas putida (strain ATCC 47054 / DSM 6125 / CFBP 8728 / NCIMB 11950 / KT2440).